A 198-amino-acid polypeptide reads, in one-letter code: Protein hunchback (198 aa).

2 disordered regions span residues 16 to 111 and 152 to 198; these read SHHH…LPGL and NDKL…KYMA. Positions 17–31 are enriched in basic residues; the sequence is HHHHHHHAHHSHHQH. Low complexity-rich tracts occupy residues 35–46 and 56–83; these read SNSNSNASSPHQ and SNTNLQLEQYLKQQQQQQQQQQQQQQQQ. The span at 95–105 shows a compositional bias: polar residues; the sequence is PSPSNNDQNSP. The span at 179 to 198 shows a compositional bias: basic and acidic residues; it reads EPEKEHDLMSNSSEDMKYMA.

The protein belongs to the hunchback C2H2-type zinc-finger protein family.

Its subcellular location is the nucleus. Functionally, gap class segmentation protein that controls development of head structures. The sequence is that of Protein hunchback (hb) from Drosophila lineosetae (Fruit fly).